The primary structure comprises 206 residues: Small ribosomal subunit protein uS4 (206 aa).

Residues 96 to 156 (TRLDNVVYRM…EKSKKQARII (61 aa)) enclose the S4 RNA-binding domain.

The protein belongs to the universal ribosomal protein uS4 family. As to quaternary structure, part of the 30S ribosomal subunit. Contacts protein S5. The interaction surface between S4 and S5 is involved in control of translational fidelity.

One of the primary rRNA binding proteins, it binds directly to 16S rRNA where it nucleates assembly of the body of the 30S subunit. Its function is as follows. With S5 and S12 plays an important role in translational accuracy. This chain is Small ribosomal subunit protein uS4, found in Shewanella woodyi (strain ATCC 51908 / MS32).